Consider the following 405-residue polypeptide: Protochlorophyllide reductase A, chloroplastic (405 aa).

The N-terminal 69 residues, 1–69, are a transit peptide targeting the chloroplast; it reads MALQAASLVS…LRNNKAIIRA (69 aa).

Belongs to the short-chain dehydrogenases/reductases (SDR) family. POR subfamily. In terms of assembly, forms large complexes including TOC33, pPORA and OEP161 during pPORA import into plastids at the plastid envelope membrane. Interacts with CPP1 during plastid import. As to expression, expressed in young seedlings. Not detected in leaves.

It localises to the plastid. Its subcellular location is the chloroplast. The enzyme catalyses chlorophyllide a + NADP(+) = protochlorophyllide a + NADPH + H(+). The protein operates within porphyrin-containing compound metabolism; chlorophyll biosynthesis. Its function is as follows. Phototransformation of protochlorophyllide (Pchlide) to chlorophyllide (Chlide). PORA may also function as a photoprotectant during the transitory stage from dark to light. Functions in skotomorphogenesis, photomorphogenesis and throughout the plant life under specific light conditions. This is Protochlorophyllide reductase A, chloroplastic (PORA) from Arabidopsis thaliana (Mouse-ear cress).